A 61-amino-acid polypeptide reads, in one-letter code: Sperm protamine P1 (61 aa).

The disordered stretch occupies residues 1-61; the sequence is MARYRHSRSR…RRYSRRRRRY (61 aa).

Belongs to the protamine P1 family. In terms of tissue distribution, testis.

Its subcellular location is the nucleus. It is found in the chromosome. Functionally, protamines substitute for histones in the chromatin of sperm during the haploid phase of spermatogenesis. They compact sperm DNA into a highly condensed, stable and inactive complex. This Macropus giganteus (Eastern gray kangaroo) protein is Sperm protamine P1 (PRM1).